The following is a 516-amino-acid chain: Apolipoprotein N-acyltransferase (516 aa).

5 helical membrane-spanning segments follow: residues 23–43, 68–88, 94–114, 135–155, and 178–198; these read ILIL…AFAP, AFWL…RWIY, VAGL…AYLA, WLLA…WVMT, and LGGI…LAML. Positions 241–481 constitute a CN hydrolase domain; it reads AQGNIAQELK…VLTGFAQSRQ (241 aa). Glu279 acts as the Proton acceptor in catalysis. Lys339 is an active-site residue. The active-site Nucleophile is Cys391. Residues 489–509 traverse the membrane as a helical segment; the sequence is FGNLPVVLGCGALLLLALLLG.

Belongs to the CN hydrolase family. Apolipoprotein N-acyltransferase subfamily.

Its subcellular location is the cell inner membrane. The catalysed reaction is N-terminal S-1,2-diacyl-sn-glyceryl-L-cysteinyl-[lipoprotein] + a glycerophospholipid = N-acyl-S-1,2-diacyl-sn-glyceryl-L-cysteinyl-[lipoprotein] + a 2-acyl-sn-glycero-3-phospholipid + H(+). It functions in the pathway protein modification; lipoprotein biosynthesis (N-acyl transfer). Functionally, catalyzes the phospholipid dependent N-acylation of the N-terminal cysteine of apolipoprotein, the last step in lipoprotein maturation. This chain is Apolipoprotein N-acyltransferase, found in Chromobacterium violaceum (strain ATCC 12472 / DSM 30191 / JCM 1249 / CCUG 213 / NBRC 12614 / NCIMB 9131 / NCTC 9757 / MK).